Here is a 330-residue protein sequence, read N- to C-terminus: Beta-hexosaminidase (330 aa).

Substrate-binding positions include aspartate 62, arginine 70, arginine 133, and 163–164; that span reads KH. Histidine 176 serves as the catalytic Proton donor/acceptor. The active-site Nucleophile is the aspartate 246.

Belongs to the glycosyl hydrolase 3 family. NagZ subfamily.

It is found in the cytoplasm. The enzyme catalyses Hydrolysis of terminal non-reducing N-acetyl-D-hexosamine residues in N-acetyl-beta-D-hexosaminides.. Its pathway is cell wall biogenesis; peptidoglycan recycling. In terms of biological role, plays a role in peptidoglycan recycling by cleaving the terminal beta-1,4-linked N-acetylglucosamine (GlcNAc) from peptide-linked peptidoglycan fragments, giving rise to free GlcNAc, anhydro-N-acetylmuramic acid and anhydro-N-acetylmuramic acid-linked peptides. In Idiomarina loihiensis (strain ATCC BAA-735 / DSM 15497 / L2-TR), this protein is Beta-hexosaminidase.